We begin with the raw amino-acid sequence, 413 residues long: Eukaryotic initiation factor 4A-8 (413 aa).

A Q motif motif is present at residues 40–68 (DSFDAMGLQENLLRGIYAYGFEKPSAIQQ). The region spanning 71–241 (IVPFCKGLDV…RKFMNKPVRI (171 aa)) is the Helicase ATP-binding domain. ATP is bound at residue 84–91 (AQSGTGKT). The short motif at 189–192 (DEAD) is the DEAD box element. The region spanning 252–413 (GIKQFYVNVD…ELPSNVADLL (162 aa)) is the Helicase C-terminal domain.

This sequence belongs to the DEAD box helicase family. eIF4A subfamily. In terms of assembly, eIF4F is a multi-subunit complex, the composition of which varies with external and internal environmental conditions. It is composed of at least EIF4A, EIF4E and EIF4G. Pollen specific.

The enzyme catalyses ATP + H2O = ADP + phosphate + H(+). ATP-dependent RNA helicase which is a subunit of the eIF4F complex involved in cap recognition and is required for mRNA binding to ribosome. In the current model of translation initiation, eIF4A unwinds RNA secondary structures in the 5'-UTR of mRNAs which is necessary to allow efficient binding of the small ribosomal subunit, and subsequent scanning for the initiator codon. This Nicotiana tabacum (Common tobacco) protein is Eukaryotic initiation factor 4A-8.